A 287-amino-acid polypeptide reads, in one-letter code: L-cysteine S-thiosulfotransferase subunit SoxA (287 aa).

The N-terminal stretch at 1-26 (MKTMTGRLVAAALVCGGAFSGAAVSA) is a signal peptide. Positions 74–168 (DDFENSGMVF…AMVALIASVS (95 aa)) constitute a Cytochrome c domain. Heme c contacts are provided by Cys102, Cys105, His106, Cys140, Cys203, Cys206, and His207. Arg244 is a substrate binding site. Cys248 contributes to the heme c binding site. Cys248 serves as the catalytic Cysteine persulfide intermediate.

This sequence belongs to the SoxA family. As to quaternary structure, heterodimer of SoxA and SoxX. Heme c is required as a cofactor. In terms of processing, cysteine persulfide at Cys-248.

Its subcellular location is the periplasm. The catalysed reaction is L-cysteinyl-[SoxY protein] + thiosulfate + 2 Fe(III)-[cytochrome c] = S-sulfosulfanyl-L-cysteinyl-[SoxY protein] + 2 Fe(II)-[cytochrome c] + 2 H(+). It catalyses the reaction S-sulfanyl-L-cysteinyl-[SoxY protein] + thiosulfate + 2 Fe(III)-[cytochrome c] = S-(2-sulfodisulfanyl)-L-cysteinyl-[SoxY protein] + 2 Fe(II)-[cytochrome c] + 2 H(+). Functionally, C-type diheme cytochrome, which is part of the SoxAX cytochrome complex involved in sulfur oxidation. The SoxAX complex catalyzes the formation of a heterodisulfide bond between the conserved cysteine residue on a sulfur carrier SoxYZ complex subunit SoxY and thiosulfate or other inorganic sulfur substrates. This leads to the liberation of two electrons, which may be transferred from the SoxAX complex to another cytochrome c and which then may be used for reductive CO(2) fixation. This chain is L-cysteine S-thiosulfotransferase subunit SoxA, found in Rhodovulum sulfidophilum (Rhodobacter sulfidophilus).